A 69-amino-acid polypeptide reads, in one-letter code: Small integral membrane protein 20 (69 aa).

The Mitochondrial matrix segment spans residues 1–8 (MAAARNLR). A helical membrane pass occupies residues 9 to 29 (TALIFGGFISMVGAAFYPIYF). Over 30 to 69 (RPLLRLEEYQKEQAVNRAGIVQEDVQPPGLKVWSDPFGRK) the chain is Mitochondrial intermembrane. Phe66 carries the post-translational modification Phenylalanine amide.

As to quaternary structure, component of the MITRAC (mitochondrial translation regulation assembly intermediate of cytochrome c oxidase complex) complex, the core components of this complex being Coa3/Mitrac12 and Cox14. Interacts with Coa3/Mitrac12 and Cox4i1. Directly interacts with newly synthesized Mt-Co1/Cox1. In terms of tissue distribution, highly expressed in the hypothalamus, substantia nigra reticulata, Edinger-Westphal nucleus, and nucleus of the solitary tract/dorsal motor nucleus of the vagus, the spinal cord, and sensory ganglia (at protein level). Also expressed in the heart, thymus, esophagus, stomach, spleen, lung, pituitary gland, kidney, jejunum, duodenum, ileum, cerebrum, pons, and colon (at protein level). Expressed in preadipocytes and apidocytes (at protein level). Expressed in pancreatic islet cells (at protein level).

It localises to the mitochondrion inner membrane. It is found in the secreted. Functionally, component of the MITRAC (mitochondrial translation regulation assembly intermediate of cytochrome c oxidase complex) complex, that regulates cytochrome c oxidase assembly. Promotes the progression of complex assembly after the association of Mt-Co1/Cox11 with Cox4I1 and Cox6c. Chaperone-like assembly factor required to stabilize newly synthesized Mt-Co1/Cox1 and to prevent its premature turnover. Its function is as follows. Peptide involved in a broad spectrum of regulatory functions. Is a ligand for GPR173. As part of the reproductive cycle, it regulates gonadotropin-releasing hormone (GnRH) signaling in the hypothalamus and pituitary gland which augments the release of luteinizing hormone. More specifically, it regulates the expression of transcription factors CEBPB and POU2F1/OCT1 through the cAMP-PKA signaling pathway, which subsequently regulate the expression of GNRHR and KISS1. Plays a protective role in memory retention through activation of GNRHR. Regulates the secretion of AVP by hypothalamic neurons. Plays a role in the transduction of the itch sensation. Induces anxiolytic effects, reducing behavior associated with anxiety. Regulates food intake as well as satiation and satiety by increasing NUCB2 expression in neurons. In the ovary, it regulates follicular growth by stimulating granulosa cell proliferation by increasing the expression of GPR173, CREB1, CYP19A1, KITLG, FSHR, and LHCGR. It also increases the production of estradiol (E2). In the heart, it regulates contractility and relaxation by activating the AKT1-NOS3 and MAPK1-MAPK3 signaling pathways. It also plays a cardioprotective role during ischemia, where it activates the SAFE and RISK pathways. Stimulates the proliferation and differentiation of preadipocytes. In pancreatic islet cells, it induces proliferation of islet cells as well as the production of INS1 and INS2 through activation of the MAPK1-MAPK3 signaling pathways. The protein is Small integral membrane protein 20 of Rattus norvegicus (Rat).